The chain runs to 237 residues: Cysteine-rich venom protein tigrin (237 aa).

Residues 1–18 (MIVFILLSLAAVLRQSFG) form the signal peptide. Positions 37–165 (VNIHNSFRRS…LYNYFYVCQY (129 aa)) constitute an SCP domain. 8 disulfide bridges follow: cysteine 74/cysteine 152, cysteine 91/cysteine 166, cysteine 147/cysteine 163, cysteine 185/cysteine 192, cysteine 188/cysteine 197, cysteine 201/cysteine 232, cysteine 210/cysteine 226, and cysteine 217/cysteine 230. The ShKT domain occupies 201-232 (CTHKDDYNNCNSLVSDCQSDWDKSHCPATCFC).

This sequence belongs to the CRISP family. In terms of tissue distribution, expressed by the venom gland.

It is found in the secreted. Functionally, this protein does not inhibit smooth muscle contraction elicited by high potassium levels or caffeine. The chain is Cysteine-rich venom protein tigrin from Rhabdophis tigrinus tigrinus (Tiger keelback snake).